Here is a 1090-residue protein sequence, read N- to C-terminus: UPF0507 protein C1Q_01007 (1090 aa).

Residues Phe-289–Asn-436 form the VPS9 domain.

Belongs to the UPF0507 family.

The protein is UPF0507 protein C1Q_01007 of Saccharomyces cerevisiae (strain JAY291) (Baker's yeast).